The following is a 95-amino-acid chain: Cell division topological specificity factor (95 aa).

The protein belongs to the MinE family.

Prevents the cell division inhibition by proteins MinC and MinD at internal division sites while permitting inhibition at polar sites. This ensures cell division at the proper site by restricting the formation of a division septum at the midpoint of the long axis of the cell. The sequence is that of Cell division topological specificity factor from Synechococcus sp. (strain CC9902).